A 251-amino-acid chain; its full sequence is Triosephosphate isomerase (251 aa).

Residue 9-11 participates in substrate binding; it reads NWK. H94 acts as the Electrophile in catalysis. E166 (proton acceptor) is an active-site residue. Substrate-binding positions include G172, S211, and 232-233; that span reads GG.

It belongs to the triosephosphate isomerase family. In terms of assembly, homodimer.

It localises to the cytoplasm. The catalysed reaction is D-glyceraldehyde 3-phosphate = dihydroxyacetone phosphate. Its pathway is carbohydrate biosynthesis; gluconeogenesis. The protein operates within carbohydrate degradation; glycolysis; D-glyceraldehyde 3-phosphate from glycerone phosphate: step 1/1. Its function is as follows. Involved in the gluconeogenesis. Catalyzes stereospecifically the conversion of dihydroxyacetone phosphate (DHAP) to D-glyceraldehyde-3-phosphate (G3P). This Stenotrophomonas maltophilia (strain K279a) protein is Triosephosphate isomerase.